A 435-amino-acid polypeptide reads, in one-letter code: Serine carboxypeptidase-like 12 (435 aa).

The signal sequence occupies residues methionine 1–serine 21. 3 disulfide bridges follow: cysteine 80/cysteine 323, cysteine 244/cysteine 258, and cysteine 282/cysteine 289. An N-linked (GlcNAc...) asparagine glycan is attached at asparagine 101. Serine 176 is a catalytic residue. N-linked (GlcNAc...) asparagine glycans are attached at residues asparagine 313, asparagine 336, and asparagine 344. Residue aspartate 360 is part of the active site. Asparagine 376 is a glycosylation site (N-linked (GlcNAc...) asparagine). Histidine 413 is an active-site residue. A glycan (N-linked (GlcNAc...) asparagine) is linked at asparagine 420.

This sequence belongs to the peptidase S10 family. As to expression, expressed in roots.

Its subcellular location is the secreted. Probable carboxypeptidase. This chain is Serine carboxypeptidase-like 12 (SCPL12), found in Arabidopsis thaliana (Mouse-ear cress).